Here is a 122-residue protein sequence, read N- to C-terminus: MARIAGIDLPRNKRIEIALTYIYGIGRTTAQKILAESGVSVDTRTDSLTEAEVAKIREFIDKNIKVEGDLRRDVSMNIKRLMDLGCYRGLRHRKGLPVRGQRTKTNARTRKGPARTVAGKKK.

The disordered stretch occupies residues proline 97–lysine 122.

Belongs to the universal ribosomal protein uS13 family. In terms of assembly, part of the 30S ribosomal subunit. Forms a loose heterodimer with protein S19. Forms two bridges to the 50S subunit in the 70S ribosome.

In terms of biological role, located at the top of the head of the 30S subunit, it contacts several helices of the 16S rRNA. In the 70S ribosome it contacts the 23S rRNA (bridge B1a) and protein L5 of the 50S subunit (bridge B1b), connecting the 2 subunits; these bridges are implicated in subunit movement. Contacts the tRNAs in the A and P-sites. The polypeptide is Small ribosomal subunit protein uS13 (Geobacter metallireducens (strain ATCC 53774 / DSM 7210 / GS-15)).